We begin with the raw amino-acid sequence, 415 residues long: Transcription termination factor Rho (415 aa).

Residues 52-119 (ADIASGVLDI…TDVVRVNGRT (68 aa)) enclose the Rho RNA-BD domain. ATP is bound by residues 161-166 (GKGQRG), 173-178 (KTGKTV), and Arg-204.

Belongs to the Rho family. In terms of assembly, homohexamer. The homohexamer assembles into an open ring structure.

Functionally, facilitates transcription termination by a mechanism that involves Rho binding to the nascent RNA, activation of Rho's RNA-dependent ATPase activity, and release of the mRNA from the DNA template. This chain is Transcription termination factor Rho, found in Streptomyces coelicolor (strain ATCC BAA-471 / A3(2) / M145).